A 78-amino-acid polypeptide reads, in one-letter code: Cell division topological specificity factor (78 aa).

The protein belongs to the MinE family.

In terms of biological role, prevents the cell division inhibition by proteins MinC and MinD at internal division sites while permitting inhibition at polar sites. This ensures cell division at the proper site by restricting the formation of a division septum at the midpoint of the long axis of the cell. In Helicobacter hepaticus (strain ATCC 51449 / 3B1), this protein is Cell division topological specificity factor.